The following is a 160-amino-acid chain: Putative pre-16S rRNA nuclease (160 aa).

The protein belongs to the YqgF nuclease family.

The protein localises to the cytoplasm. Its function is as follows. Could be a nuclease involved in processing of the 5'-end of pre-16S rRNA. In Chelativorans sp. (strain BNC1), this protein is Putative pre-16S rRNA nuclease.